Here is a 575-residue protein sequence, read N- to C-terminus: MQGPSLSQLVLVLMGALLEAGTPREEVSSTPALPREPRTGTEGLIFHWDWNWPPPGAWPPGGPQDPLCLVTLNGTPGNGSSPFLWVVGTLSSYEQAFLEAVRHARWGPQDLANFGLCPPSLRQAALPLLQQLQAWLGEPRGQRLVVLHLEEVSWEPTPLLKFQEPLPGEASPLELALLVLYPGPGPEVTVTGAGLPGAQSLCPTRDSGFLALAVDRPERAWRGSGLALTLRRRGNGASLSTAQLQALLFGADSRCFTRMTPALLLLPPQGPVPMPAHGRVDSMPFPQPRLSPEPEEPLPSTDPFLETLTRLVRALRGPPARIPPPSLALDPGALAGFPQGQVNLSDPAALERLLNSEEPLLLLLPPPTAVTAGVPAPLQGPVTEMWASSLARRVATEFQSAAAELRGFPGLPPTATLLLARLLALCPGDRGDPGGPLRAVLLLKALQGLRTEWRWRERSGPARAQRSAGTAVSNGPCALRELSVDLRAERSVLIPETYQANNCQGTCGWPQSDRNPRYGNHVVLLLKMQARGAALARPPCCVPTAYAGKLLISLSEERISAHHVPNMVATECGCR.

An N-terminal signal peptide occupies residues 1–20; that stretch reads MQGPSLSQLVLVLMGALLEA. A propeptide spanning residues 21–466 is cleaved from the precursor; it reads GTPREEVSST…ERSGPARAQR (446 aa). N-linked (GlcNAc...) asparagine glycans are attached at residues N78 and N343. Disulfide bonds link C477/C541, C503/C572, and C507/C574.

Belongs to the TGF-beta family. In terms of assembly, homodimer; disulfide-linked. Preproprotein is proteolytically processed to generate N- and C-terminal cleavage products that homodimerize and associate to form a biologically active non-covalent complex. Binding of the non-covalent complex to AMHR2 induces dissociation of the pro-region from the mature C-terminal dimer. The N-terminal portion of the protein, despite having no intrinsic activity, has the role of amplifying the activity of the C-terminus. Detected in fetal Sertoli cells. Expressed in granulosa cells of growing follicles but also in theca cells of preovulatory follicles and corpora lutea (at protein level).

The protein localises to the secreted. Its function is as follows. Plays an important role in several reproductive functions. Induces Muellerian duct regression during male fetal sexual differentiation and plays a role in Leydig cell differentiation and function. In female acts as a negative regulator of the primordial to primary follicle transition and decreases FSH sensitivity of growing follicles. AMH signals by binding to a specific type-II receptor, AMHR2, that heterodimerizes with type-I receptors (ACVR1 and BMPR1A), and recruiting SMAD proteins that are translocated to the nucleus to regulate target gene expression. The chain is Muellerian-inhibiting factor (AMH) from Sus scrofa (Pig).